The sequence spans 212 residues: Lipopolysaccharide core heptose(II)-phosphate phosphatase (212 aa).

Residues 1 to 32 (MSIGGVYELAFCRSSLKSKKYFIILLALAAIA) form the signal peptide.

It belongs to the phosphoglycerate mutase family. Ais subfamily.

It is found in the periplasm. The protein operates within bacterial outer membrane biogenesis; lipopolysaccharide metabolism. In terms of biological role, catalyzes the dephosphorylation of heptose(II) of the outer membrane lipopolysaccharide core. The chain is Lipopolysaccharide core heptose(II)-phosphate phosphatase from Shigella boydii serotype 4 (strain Sb227).